The primary structure comprises 290 residues: 4-hydroxy-tetrahydrodipicolinate synthase (290 aa).

T44 is a binding site for pyruvate. Y132 acts as the Proton donor/acceptor in catalysis. K160 (schiff-base intermediate with substrate) is an active-site residue. I202 provides a ligand contact to pyruvate.

Belongs to the DapA family. Homotetramer; dimer of dimers.

The protein localises to the cytoplasm. It carries out the reaction L-aspartate 4-semialdehyde + pyruvate = (2S,4S)-4-hydroxy-2,3,4,5-tetrahydrodipicolinate + H2O + H(+). Its pathway is amino-acid biosynthesis; L-lysine biosynthesis via DAP pathway; (S)-tetrahydrodipicolinate from L-aspartate: step 3/4. Catalyzes the condensation of (S)-aspartate-beta-semialdehyde [(S)-ASA] and pyruvate to 4-hydroxy-tetrahydrodipicolinate (HTPA). This is 4-hydroxy-tetrahydrodipicolinate synthase from Ruegeria pomeroyi (strain ATCC 700808 / DSM 15171 / DSS-3) (Silicibacter pomeroyi).